Consider the following 255-residue polypeptide: 5'-nucleotidase SurE (255 aa).

4 residues coordinate a divalent metal cation: aspartate 8, aspartate 9, serine 40, and asparagine 92.

This sequence belongs to the SurE nucleotidase family. A divalent metal cation is required as a cofactor.

It localises to the cytoplasm. It catalyses the reaction a ribonucleoside 5'-phosphate + H2O = a ribonucleoside + phosphate. In terms of biological role, nucleotidase that shows phosphatase activity on nucleoside 5'-monophosphates. This is 5'-nucleotidase SurE from Brucella abortus (strain S19).